Here is a 132-residue protein sequence, read N- to C-terminus: MSKMTVEVVTPERVVYSGQAEMVIARGLQGEIGIMPNHMPLVTPLKTAPVRIKTEGDKEVKMAVSGGFMEVRGDKVTILAETAELPGDIDVERAKAARERAEKRLTEKYAELDVKRAERALQRAMARLDVSK.

It belongs to the ATPase epsilon chain family. F-type ATPases have 2 components, CF(1) - the catalytic core - and CF(0) - the membrane proton channel. CF(1) has five subunits: alpha(3), beta(3), gamma(1), delta(1), epsilon(1). CF(0) has three main subunits: a, b and c.

It localises to the cell membrane. In terms of biological role, produces ATP from ADP in the presence of a proton gradient across the membrane. The protein is ATP synthase epsilon chain of Brevibacillus brevis (strain 47 / JCM 6285 / NBRC 100599).